Consider the following 326-residue polypeptide: Ficolin-1 (326 aa).

A signal peptide spans 1-29; the sequence is MELSGATMARGLAVLLVLFLHIKNLPAQA. One can recognise a Collagen-like domain in the interval 55-93; it reads GLPGAPGPKGEAGVIGERGERGLPGAPGKAGPVGPKGDR. Positions 72 to 111 are disordered; it reads RGERGLPGAPGKAGPVGPKGDRGEKGMRGEKGDAGQSQSC. Positions 77–89 are enriched in low complexity; it reads LPGAPGKAGPVGP. Over residues 90–104 the composition is skewed to basic and acidic residues; it reads KGDRGEKGMRGEKGD. The Fibrinogen C-terminal domain occupies 109 to 326; the sequence is QSCATGPRNC…KVSEMKVRPA (218 aa). 2 disulfide bridges follow: Cys-111/Cys-139 and Cys-118/Cys-146. The tract at residues 115-154 is a domain; contributes to trimerization; it reads PRNCKDLLDRGYFLSGWHTIYLPDCRPLTVLCDMDTDGGG. The tract at residues 155-243 is b domain; contributes to trimerization; sequence WTVFQRRMDG…LVLGAFVGGS (89 aa). Residues Asp-262, Asp-264, Ser-266, and Ser-268 each coordinate Ca(2+). A disulfide bridge links Cys-270 with Cys-283. 282 to 284 contacts a carbohydrate; that stretch reads DCH. Asn-305 carries N-linked (GlcNAc...) asparagine glycosylation. The interval 317–326 is p domain; the sequence is KVSEMKVRPA.

It belongs to the ficolin lectin family. In terms of assembly, homotrimer. Interacts with elastin/ELN. Interacts (via Fibrinogen C-terminal domain) with FFAR2. Interacts with CRP; may regulate monocyte activation by FCN1. As to expression, peripheral blood leukocytes, monocytes and granulocytes. Also detected in spleen, lung, and thymus, may be due to the presence of tissue macrophages or trapped blood in these tissues. Not detected on lymphocytes.

The protein resides in the secreted. It is found in the cell membrane. Extracellular lectin functioning as a pattern-recognition receptor in innate immunity. Binds the sugar moieties of pathogen-associated molecular patterns (PAMPs) displayed on microbes and activates the lectin pathway of the complement system. May also activate monocytes through a G protein-coupled receptor, FFAR2, inducing the secretion of interleukin-8/IL-8. Binds preferentially to 9-O-acetylated 2-6-linked sialic acid derivatives and to various glycans containing sialic acid engaged in a 2-3 linkage. The polypeptide is Ficolin-1 (FCN1) (Homo sapiens (Human)).